Consider the following 252-residue polypeptide: Large ribosomal subunit protein uL30 (252 aa).

It belongs to the universal ribosomal protein uL30 family.

Its function is as follows. Binds to G-rich structures in 28S rRNA and in mRNAs. Plays a regulatory role in the translation apparatus; inhibits cell-free translation of mRNAs. This Drosophila melanogaster (Fruit fly) protein is Large ribosomal subunit protein uL30 (RpL7).